Consider the following 538-residue polypeptide: Sucrose transport protein SUT1 (538 aa).

Topologically, residues Met-1–Arg-52 are cytoplasmic. A helical transmembrane segment spans residues Leu-53–Leu-73. The Extracellular segment spans residues Leu-74 to Leu-81. The chain crosses the membrane as a helical span at residues Gly-82–Val-102. Residues Gln-103–Tyr-123 lie on the Cytoplasmic side of the membrane. The chain crosses the membrane as a helical span at residues Ile-124–Ile-144. Residues Gly-145–Arg-162 are Extracellular-facing. Residues Trp-163–Val-183 traverse the membrane as a helical segment. Over Gln-184 to His-198 the chain is Cytoplasmic. A helical membrane pass occupies residues Gly-199–Tyr-219. Topologically, residues Ser-220–Lys-247 are extracellular. The chain crosses the membrane as a helical span at residues Gly-248–Ala-268. The Cytoplasmic segment spans residues Lys-269 to Thr-306. The helical transmembrane segment at Gly-307 to Leu-327 threads the bilayer. Residues Tyr-328 to Arg-357 are Extracellular-facing. The chain crosses the membrane as a helical span at residues Ala-358–Glu-378. Residues Pro-379–Val-388 are Cytoplasmic-facing. Residues Val-389–Phe-409 form a helical membrane-spanning segment. The Extracellular segment spans residues Trp-410 to Cys-433. A helical membrane pass occupies residues Leu-434–Val-454. The Cytoplasmic portion of the chain corresponds to Thr-455–Thr-470. A helical membrane pass occupies residues Gly-471–Trp-491. Topologically, residues Asp-492 to Asn-499 are extracellular. The chain crosses the membrane as a helical span at residues Ile-500–Leu-520. Residues Leu-521–His-538 lie on the Cytoplasmic side of the membrane.

Belongs to the glycoside-pentoside-hexuronide (GPH) cation symporter transporter (TC 2.A.2.4) family. As to quaternary structure, homodimer.

The protein localises to the cell membrane. It functions in the pathway glycan biosynthesis; sucrose metabolism. Its function is as follows. Responsible for the transport of sucrose into the cell, with the concomitant uptake of protons (symport system). May also transport other glucosides. May be required for apoplastic phloem sucrose loading in source tissues (e.g. leaves) in order to transport it to sink tissues (e.g. roots, flowers). This chain is Sucrose transport protein SUT1 (SUT1), found in Oryza sativa subsp. indica (Rice).